The chain runs to 162 residues: Zinc finger protein 593 homolog (162 aa).

The C2H2-type zinc-finger motif lies at 59–83; sequence FYCVHCAKYFIDDTAMQAHFRTKVH. The tract at residues 110 to 162 is disordered; it reads VKPKKRAMETQPSKEDVVAGKRIRVEVVPEDTDATDSPSTSKTKRKKVEKMET. Residues 115-136 are compositionally biased toward basic and acidic residues; the sequence is RAMETQPSKEDVVAGKRIRVEV. The segment covering 151–162 has biased composition (basic residues); the sequence is KTKRKKVEKMET.

This sequence belongs to the ZNF593/BUD20 C2H2-type zinc-finger protein family. Associates with pre-60S ribosomal particles; released from the pre-60S particle very early in the cytoplasm.

It is found in the nucleus. The protein localises to the cytoplasm. In terms of biological role, involved in pre-60S ribosomal particles maturation by promoting the nuclear export of the 60S ribosome. The chain is Zinc finger protein 593 homolog from Drosophila melanogaster (Fruit fly).